Here is a 369-residue protein sequence, read N- to C-terminus: Glutamate 5-kinase (369 aa).

Position 14 (K14) interacts with ATP. Positions 56, 143, and 155 each coordinate substrate. Residues 175-176 and 215-221 contribute to the ATP site; these read SD and TGGMASK. A PUA domain is found at 277 to 351; that stretch reads AGKIRLDDGA…GMQTQDLPDG (75 aa).

The protein belongs to the glutamate 5-kinase family.

It is found in the cytoplasm. The catalysed reaction is L-glutamate + ATP = L-glutamyl 5-phosphate + ADP. Its pathway is amino-acid biosynthesis; L-proline biosynthesis; L-glutamate 5-semialdehyde from L-glutamate: step 1/2. In terms of biological role, catalyzes the transfer of a phosphate group to glutamate to form L-glutamate 5-phosphate. This Corynebacterium glutamicum (strain ATCC 13032 / DSM 20300 / JCM 1318 / BCRC 11384 / CCUG 27702 / LMG 3730 / NBRC 12168 / NCIMB 10025 / NRRL B-2784 / 534) protein is Glutamate 5-kinase.